Reading from the N-terminus, the 436-residue chain is GTPase Der (436 aa).

2 EngA-type G domains span residues 4 to 167 and 174 to 350; these read PVVA…PEVE and VRVA…EQRT. Residues 10-17, 57-61, 120-123, 180-187, 227-231, and 292-295 each bind GTP; these read GRPNVGKS, DTGGL, NKVD, DTAGL, and NKWD. In terms of domain architecture, KH-like spans 351 to 435; the sequence is RRISTSEVND…PLRIILRRKN (85 aa).

Belongs to the TRAFAC class TrmE-Era-EngA-EngB-Septin-like GTPase superfamily. EngA (Der) GTPase family. Associates with the 50S ribosomal subunit.

In terms of biological role, GTPase that plays an essential role in the late steps of ribosome biogenesis. The protein is GTPase Der of Gemmatimonas aurantiaca (strain DSM 14586 / JCM 11422 / NBRC 100505 / T-27).